The sequence spans 231 residues: uncharacterized protein (231 aa).

The chain crosses the membrane as a helical span at residues 10–30 (SQNIFFIAIVIFILSSVILYH).

The protein resides in the membrane. This is an uncharacterized protein from Rickettsia prowazekii (strain Madrid E).